The sequence spans 599 residues: Beta-(1--&gt;2)glucan export ATP-binding/permease protein NdvA (599 aa).

In terms of domain architecture, ABC transmembrane type-1 spans 21-301; that stretch reads TITMCVASVL…ISAFINQTVT (281 aa). 5 helical membrane-spanning segments follow: residues 22 to 42, 55 to 75, 156 to 176, 248 to 268, and 276 to 296; these read ITMCVASVLVALVTLAEPVLF, IFSPLLMWAALGGFNIMAAVF, MRMSLVLIVLGVIYVMIGQLV, MASTFSMVVVLVLGAYFVTKG, and IAFIGFAQLMIGRLDQISAFI. The 235-residue stretch at 335-569 folds into the ABC transporter domain; it reads IVFDNVTYEF…GGRFSDLLRA (235 aa). An ATP-binding site is contributed by 368 to 375; sequence GPTGAGKT.

The protein belongs to the ABC transporter superfamily. Beta-(1--&gt;2)glucan exporter (TC 3.A.1.108.1) family. As to quaternary structure, homodimer.

Its subcellular location is the cell inner membrane. The enzyme catalyses [(1-&gt;2)-beta-D-glucosyl](n)(in) + ATP + H2O = [(1-&gt;2)-beta-D-glucosyl](n)(out) + ADP + phosphate + H(+). Involved in beta-(1--&gt;2)glucan export. Its export to the periplasmic space is required to exert its action as a virulence factor. Transmembrane domains (TMD) form a pore in the inner membrane and the ATP-binding domain (NBD) is responsible for energy generation. The protein is Beta-(1--&gt;2)glucan export ATP-binding/permease protein NdvA of Brucella abortus (strain 2308).